The primary structure comprises 150 residues: MRAVCQRAQSASVTVDGKVVGSFEGEGLVILLGVSVTDTEAEAVQVARKVAGLRMLDGERSLTDAGAPALVVSQFTLYGDVRKGRRPSWTRAAKGDQAEPLYERFTAELEAAGVRVERGVFGAMMDVSLTNSGPFTLIVDSDELAGPRRG.

A Gly-cisPro motif, important for rejection of L-amino acids motif is present at residues 133 to 134; the sequence is GP.

This sequence belongs to the DTD family. As to quaternary structure, homodimer.

It is found in the cytoplasm. The enzyme catalyses glycyl-tRNA(Ala) + H2O = tRNA(Ala) + glycine + H(+). It catalyses the reaction a D-aminoacyl-tRNA + H2O = a tRNA + a D-alpha-amino acid + H(+). Its function is as follows. An aminoacyl-tRNA editing enzyme that deacylates mischarged D-aminoacyl-tRNAs. Also deacylates mischarged glycyl-tRNA(Ala), protecting cells against glycine mischarging by AlaRS. Acts via tRNA-based rather than protein-based catalysis; rejects L-amino acids rather than detecting D-amino acids in the active site. By recycling D-aminoacyl-tRNA to D-amino acids and free tRNA molecules, this enzyme counteracts the toxicity associated with the formation of D-aminoacyl-tRNA entities in vivo and helps enforce protein L-homochirality. This is D-aminoacyl-tRNA deacylase from Micrococcus luteus (strain ATCC 4698 / DSM 20030 / JCM 1464 / CCM 169 / CCUG 5858 / IAM 1056 / NBRC 3333 / NCIMB 9278 / NCTC 2665 / VKM Ac-2230) (Micrococcus lysodeikticus).